Consider the following 1045-residue polypeptide: B3 domain-containing protein REM13 (1045 aa).

The TF-B3 1 DNA-binding region spans 7–96; the sequence is YPQFFHTLVP…VFHVSNLGPN (90 aa). Residues 121 to 147 are disordered; it reads NNGDVCDSEELPKEKKAKTNSEEADAV. Residues 130 to 141 are compositionally biased toward basic and acidic residues; the sequence is ELPKEKKAKTNS. 2 consecutive DNA-binding regions (TF-B3) follow at residues 157–253 and 305–398; these read CFMA…FCPT and FVTF…CSPE. Residues 423–449 form a disordered region; it reads NRDKISNNDKEENMSWERKKDHLKSRD. The TF-B3 4 DNA-binding region spans 474–570; the sequence is SNDSCLVVVS…TPVLSLCPAD (97 aa). The segment at 606 to 625 is disordered; the sequence is IKDDNSKEKNDKEESKSVDG. 3 DNA-binding regions (TF-B3) span residues 643-738, 815-910, and 940-1035; these read FVTL…LRTE, FVTF…LRTK, and FVTL…LKFS.

It is found in the nucleus. The polypeptide is B3 domain-containing protein REM13 (REM13) (Arabidopsis thaliana (Mouse-ear cress)).